The following is a 247-amino-acid chain: Adenylyl-sulfate kinase (247 aa).

Residues 1-24 (MSQSNSDDSASSSTQQAGDGQDDV) are disordered. 55-62 (GLSGCGKS) serves as a coordination point for ATP. Residue serine 146 is the Phosphoserine intermediate of the active site.

This sequence belongs to the APS kinase family.

The catalysed reaction is adenosine 5'-phosphosulfate + ATP = 3'-phosphoadenylyl sulfate + ADP + H(+). The protein operates within sulfur metabolism; hydrogen sulfide biosynthesis; sulfite from sulfate: step 2/3. In terms of biological role, catalyzes the synthesis of activated sulfate. This chain is Adenylyl-sulfate kinase, found in Rhodopirellula baltica (strain DSM 10527 / NCIMB 13988 / SH1).